Reading from the N-terminus, the 337-residue chain is MVQWISPLDNSIVIASKVKILRNIKGIKFTKLLNEEEFNDLLSMVLGRLKEIDILDKCYVVKLKDGEEKIIDYYKENFGLIKYFENKDNLIFIMNKNGEFNILLNEEEHIGIECTNSGLSLREVYSKVDNLDDLIEEKIHYSFDSELGYLTSNIKNLGTALRAKVFIHLPLLSSNNLIRIIKNALKEEGITLKSIYNSGNKDVGNIYEVSNIKTLGMSEKDILDSLISITNKLILREKNQRDNLSKDEYIELKDDILRSLGVLRNTYSIDRDEALKYLSYVRLGVELGIIEDLSLKSVNSAMIEIQPDMINNSSIKKRDIQSLKIERAKIIRNALNT.

The Phosphagen kinase C-terminal domain occupies 12–240 (IVIASKVKIL…NKLILREKNQ (229 aa)). Residues 15-19 (ASKVK), 162-166 (RAKVF), and 193-198 (KSIYNS) contribute to the ATP site.

Belongs to the ATP:guanido phosphotransferase family.

The catalysed reaction is L-arginyl-[protein] + ATP = N(omega)-phospho-L-arginyl-[protein] + ADP + H(+). In terms of biological role, catalyzes the specific phosphorylation of arginine residues in proteins. In Clostridium perfringens (strain ATCC 13124 / DSM 756 / JCM 1290 / NCIMB 6125 / NCTC 8237 / Type A), this protein is Protein-arginine kinase.